Reading from the N-terminus, the 227-residue chain is Cytochrome c oxidase subunit 2 (227 aa).

At methionine 1–serine 14 the chain is on the mitochondrial intermembrane side. A helical transmembrane segment spans residues proline 15 to methionine 45. Topologically, residues leucine 46–glutamine 59 are mitochondrial matrix. The chain crosses the membrane as a helical span at residues glutamate 60–methionine 87. The Mitochondrial intermembrane portion of the chain corresponds to aspartate 88–leucine 227. Residues cysteine 196, glutamate 198, cysteine 200, histidine 204, and methionine 207 each coordinate Cu cation. Glutamate 198 contributes to the Mg(2+) binding site. Phosphotyrosine is present on tyrosine 218.

It belongs to the cytochrome c oxidase subunit 2 family. As to quaternary structure, component of the cytochrome c oxidase (complex IV, CIV), a multisubunit enzyme composed of 14 subunits. The complex is composed of a catalytic core of 3 subunits MT-CO1, MT-CO2 and MT-CO3, encoded in the mitochondrial DNA, and 11 supernumerary subunits COX4I, COX5A, COX5B, COX6A, COX6B, COX6C, COX7A, COX7B, COX7C, COX8 and NDUFA4, which are encoded in the nuclear genome. The complex exists as a monomer or a dimer and forms supercomplexes (SCs) in the inner mitochondrial membrane with NADH-ubiquinone oxidoreductase (complex I, CI) and ubiquinol-cytochrome c oxidoreductase (cytochrome b-c1 complex, complex III, CIII), resulting in different assemblies (supercomplex SCI(1)III(2)IV(1) and megacomplex MCI(2)III(2)IV(2)). Found in a complex with TMEM177, COA6, COX18, COX20, SCO1 and SCO2. Interacts with TMEM177 in a COX20-dependent manner. Interacts with COX20. Interacts with COX16. Cu cation is required as a cofactor.

Its subcellular location is the mitochondrion inner membrane. The enzyme catalyses 4 Fe(II)-[cytochrome c] + O2 + 8 H(+)(in) = 4 Fe(III)-[cytochrome c] + 2 H2O + 4 H(+)(out). Its function is as follows. Component of the cytochrome c oxidase, the last enzyme in the mitochondrial electron transport chain which drives oxidative phosphorylation. The respiratory chain contains 3 multisubunit complexes succinate dehydrogenase (complex II, CII), ubiquinol-cytochrome c oxidoreductase (cytochrome b-c1 complex, complex III, CIII) and cytochrome c oxidase (complex IV, CIV), that cooperate to transfer electrons derived from NADH and succinate to molecular oxygen, creating an electrochemical gradient over the inner membrane that drives transmembrane transport and the ATP synthase. Cytochrome c oxidase is the component of the respiratory chain that catalyzes the reduction of oxygen to water. Electrons originating from reduced cytochrome c in the intermembrane space (IMS) are transferred via the dinuclear copper A center (CU(A)) of subunit 2 and heme A of subunit 1 to the active site in subunit 1, a binuclear center (BNC) formed by heme A3 and copper B (CU(B)). The BNC reduces molecular oxygen to 2 water molecules using 4 electrons from cytochrome c in the IMS and 4 protons from the mitochondrial matrix. This Ovis aries (Sheep) protein is Cytochrome c oxidase subunit 2 (MT-CO2).